Reading from the N-terminus, the 273-residue chain is MTDQTLRLENVSPYLLLILDYFEKNCINKTDLFSIQGNQENVNRIISNIKNFTPTKQFEKDLNRGLYSRHDLSFSIINILNSLNHPLLLENYNEAYIVNAYYEDIERIKQTLLELPHSNLEIILKLFSTFNLLCNQEEHKSFLLLSPEMLGETFAFVLMRFKKTKDEVDQFGNKIFATNVISYLISHFNEIFDSTILDFEQKEKKSRENAILFMEYAMRKYTSLDNHFKSIYNKYIPHKRDLSQEDVQTIKTEFNLRKYSGKSKIRPPIPIYM.

The Rho-GAP domain maps to 1–192 (MTDQTLRLEN…YLISHFNEIF (192 aa)).

It is found in the cytoplasm. Its function is as follows. Rho GTPase-activating protein involved in the signal transduction pathway. This is Rho GTPase-activating protein gacB (gacB) from Dictyostelium discoideum (Social amoeba).